The primary structure comprises 161 residues: Protein-export protein SecB (161 aa).

It belongs to the SecB family. As to quaternary structure, homotetramer, a dimer of dimers. One homotetramer interacts with 1 SecA dimer.

It localises to the cytoplasm. Functionally, one of the proteins required for the normal export of preproteins out of the cell cytoplasm. It is a molecular chaperone that binds to a subset of precursor proteins, maintaining them in a translocation-competent state. It also specifically binds to its receptor SecA. The sequence is that of Protein-export protein SecB from Bradyrhizobium diazoefficiens (strain JCM 10833 / BCRC 13528 / IAM 13628 / NBRC 14792 / USDA 110).